Reading from the N-terminus, the 242-residue chain is Ubiquinone biosynthesis O-methyltransferase (242 aa).

Residues Arg-44, Gly-64, Asp-85, and Met-129 each contribute to the S-adenosyl-L-methionine site.

The protein belongs to the methyltransferase superfamily. UbiG/COQ3 family.

The catalysed reaction is a 3-demethylubiquinol + S-adenosyl-L-methionine = a ubiquinol + S-adenosyl-L-homocysteine + H(+). It carries out the reaction a 3-(all-trans-polyprenyl)benzene-1,2-diol + S-adenosyl-L-methionine = a 2-methoxy-6-(all-trans-polyprenyl)phenol + S-adenosyl-L-homocysteine + H(+). It functions in the pathway cofactor biosynthesis; ubiquinone biosynthesis. In terms of biological role, O-methyltransferase that catalyzes the 2 O-methylation steps in the ubiquinone biosynthetic pathway. The polypeptide is Ubiquinone biosynthesis O-methyltransferase (Yersinia enterocolitica serotype O:8 / biotype 1B (strain NCTC 13174 / 8081)).